A 455-amino-acid chain; its full sequence is GTPase Der (455 aa).

2 EngA-type G domains span residues F3 to A167 and I184 to N359. GTP contacts are provided by residues G9–S16, D56–L60, N119–E122, G190–S197, D237–L241, and N302–D305. The KH-like domain occupies R360–A444.

It belongs to the TRAFAC class TrmE-Era-EngA-EngB-Septin-like GTPase superfamily. EngA (Der) GTPase family. In terms of assembly, associates with the 50S ribosomal subunit.

GTPase that plays an essential role in the late steps of ribosome biogenesis. The sequence is that of GTPase Der from Nitrobacter winogradskyi (strain ATCC 25391 / DSM 10237 / CIP 104748 / NCIMB 11846 / Nb-255).